Reading from the N-terminus, the 318-residue chain is Phosphoenolpyruvate transferase (318 aa).

7,8-didemethyl-8-hydroxy-5-deazariboflavin is bound at residue Asp-50.

The protein belongs to the CofD family. In terms of assembly, homodimer. It depends on Mg(2+) as a cofactor.

It catalyses the reaction enolpyruvoyl-2-diphospho-5'-guanosine + 7,8-didemethyl-8-hydroxy-5-deazariboflavin = dehydro coenzyme F420-0 + GMP + H(+). It participates in cofactor biosynthesis; coenzyme F420 biosynthesis. Its function is as follows. Catalyzes the transfer of the phosphoenolpyruvate moiety from enoylpyruvoyl-2-diphospho-5'-guanosine (EPPG) to 7,8-didemethyl-8-hydroxy-5-deazariboflavin (FO) with the formation of dehydro coenzyme F420-0 and GMP. This Streptomyces griseus subsp. griseus (strain JCM 4626 / CBS 651.72 / NBRC 13350 / KCC S-0626 / ISP 5235) protein is Phosphoenolpyruvate transferase.